The sequence spans 201 residues: Peroxiredoxin prdx-2 (201 aa).

The region spanning 10-168 (AFIGKPAPQF…TLRLVQAFQF (159 aa)) is the Thioredoxin domain. The active-site Cysteine sulfenic acid (-SOH) intermediate is the Cys55.

This sequence belongs to the peroxiredoxin family. AhpC/Prx1 subfamily. As to quaternary structure, monomer and homodimer; disulfide-linked. Under nonstress conditions, present in the reduced monomeric form. Forms active hyperoxidized monomers and disulfide-linked homodimers upon oxidation by hydrogen peroxide. Forms active oxidized homodimers in response to the drug metformin. Post-translationally, the enzyme can be inactivated by further oxidation of the cysteine sulfenic acid (C(P)-SOH) to sulphinic acid (C(P)-SO2H) instead of its condensation to a disulfide bond. In terms of tissue distribution, expressed in the gonad, neurons and intestine (at protein level). Expressed in the pharyngeal inter-neuron I4 and the sensory interneuron I2. Expressed in the intestine, pharyngeal muscle 1, vulval muscle, body wall muscle, epithelial cells e1 and e3, and neurons in the head and tail.

It localises to the cytoplasm. It catalyses the reaction a hydroperoxide + [thioredoxin]-dithiol = an alcohol + [thioredoxin]-disulfide + H2O. Activated following oxidation of the conserved redox-active cysteine residue, which subsequently allows for the oxidation and activation of substrates. Its function is as follows. Thiol-specific peroxidase that catalyzes the reduction of hydrogen peroxide and organic hydroperoxides to water and alcohols, respectively. In I2 pharyngeal neurons, required for the inhibition of feeding in response to light and hydrogen peroxide. In the intestine, plays a role in protecting cells against oxidative stress by detoxifying peroxides such as hydrogen peroxide. In addition, plays a role in the recovery from oxidative stress induced by hydrogen peroxide. In its hyperoxidized form (induced by hydrogen peroxide), confers protection against heat stress. However, has a low tendency for overoxidation during the normal lifespan. Increases sensitivity to cytotoxicity caused by metalloids and heavy metals such as arsenic and cadmium by playing a role in inhibiting the expression of phase II detoxification genes such as gcs-1 in intestinal cells. In addition, in response to arsenite, promotes the secretion of the insulin ligand daf-28 into the pseudocoelom, which negatively regulates the activities of daf-16 and skn-1. Plays a role in promoting longevity. Plays a role in the mitohormetic pathway by promoting the activation of pmk-1 in response to the drug metformin. The chain is Peroxiredoxin prdx-2 from Caenorhabditis elegans.